We begin with the raw amino-acid sequence, 316 residues long: Aspartate carbamoyltransferase catalytic subunit (316 aa).

Carbamoyl phosphate is bound by residues Arg66 and Thr67. Lys94 contributes to the L-aspartate binding site. Residues Arg116, His146, and Gln149 each coordinate carbamoyl phosphate. Residues Arg179 and Arg234 each coordinate L-aspartate. The carbamoyl phosphate site is built by Gly275 and Pro276.

It belongs to the aspartate/ornithine carbamoyltransferase superfamily. ATCase family. As to quaternary structure, heterododecamer (2C3:3R2) of six catalytic PyrB chains organized as two trimers (C3), and six regulatory PyrI chains organized as three dimers (R2).

It catalyses the reaction carbamoyl phosphate + L-aspartate = N-carbamoyl-L-aspartate + phosphate + H(+). Its pathway is pyrimidine metabolism; UMP biosynthesis via de novo pathway; (S)-dihydroorotate from bicarbonate: step 2/3. Catalyzes the condensation of carbamoyl phosphate and aspartate to form carbamoyl aspartate and inorganic phosphate, the committed step in the de novo pyrimidine nucleotide biosynthesis pathway. In Nitrosomonas europaea (strain ATCC 19718 / CIP 103999 / KCTC 2705 / NBRC 14298), this protein is Aspartate carbamoyltransferase catalytic subunit.